Here is a 179-residue protein sequence, read N- to C-terminus: UPF0227 protein SO_2251 (179 aa).

Belongs to the UPF0227 family.

The sequence is that of UPF0227 protein SO_2251 from Shewanella oneidensis (strain ATCC 700550 / JCM 31522 / CIP 106686 / LMG 19005 / NCIMB 14063 / MR-1).